A 392-amino-acid chain; its full sequence is 26S proteasome regulatory subunit 8 homolog (392 aa).

176-183 (GPPGTGKT) serves as a coordination point for ATP.

Belongs to the AAA ATPase family. As to quaternary structure, the 26S proteasome consists of a 20S proteasome core and two 19S regulatory subunits. The 20S proteasome core is composed of 28 subunits that are arranged in four stacked rings, resulting in a barrel-shaped structure. The two end rings are each formed by seven alpha subunits, and the two central rings are each formed by seven beta subunits. The catalytic chamber with the active sites is on the inside of the barrel.

The protein resides in the cytoplasm. It localises to the nucleus. Its function is as follows. Acts as a regulatory subunit of the 26S proteasome which degrades poly-ubiquitinated proteins in the cytoplasm and in the nucleus. It is essential for the regulated turnover of proteins and for the removal of misfolded proteins. The proteasome is a multicatalytic proteinase complex that is characterized by its ability to cleave peptides with Arg, Phe, Tyr, Leu, and Glu adjacent to the leaving group at neutral or slightly basic pH. This Encephalitozoon cuniculi (strain GB-M1) (Microsporidian parasite) protein is 26S proteasome regulatory subunit 8 homolog (RPT6).